The chain runs to 451 residues: Exodeoxyribonuclease 7 large subunit (451 aa).

It belongs to the XseA family. As to quaternary structure, heterooligomer composed of large and small subunits.

It localises to the cytoplasm. It catalyses the reaction Exonucleolytic cleavage in either 5'- to 3'- or 3'- to 5'-direction to yield nucleoside 5'-phosphates.. In terms of biological role, bidirectionally degrades single-stranded DNA into large acid-insoluble oligonucleotides, which are then degraded further into small acid-soluble oligonucleotides. The chain is Exodeoxyribonuclease 7 large subunit from Neisseria gonorrhoeae (strain ATCC 700825 / FA 1090).